A 423-amino-acid polypeptide reads, in one-letter code: Mannose-6-phosphate isomerase (423 aa).

Position 2 is an N-acetylalanine (Ala-2). Phosphoserine occurs at positions 102 and 108. 4 residues coordinate Zn(2+): Gln-110, His-112, Glu-137, and His-276. Arg-295 is a catalytic residue.

It belongs to the mannose-6-phosphate isomerase type 1 family. Zn(2+) is required as a cofactor.

The protein localises to the cytoplasm. It catalyses the reaction D-mannose 6-phosphate = D-fructose 6-phosphate. Its pathway is nucleotide-sugar biosynthesis; GDP-alpha-D-mannose biosynthesis; alpha-D-mannose 1-phosphate from D-fructose 6-phosphate: step 1/2. In terms of biological role, isomerase that catalyzes the interconversion of fructose-6-P and mannose-6-P and has a critical role in the supply of D-mannose derivatives required for many eukaryotic glycosylation reactions. This is Mannose-6-phosphate isomerase from Rattus norvegicus (Rat).